The sequence spans 293 residues: Putative ribose uptake protein RbsU (293 aa).

Helical transmembrane passes span serine 2–serine 24, isoleucine 34–phenylalanine 56, leucine 63–phenylalanine 80, threonine 95–isoleucine 117, isoleucine 122–tryptophan 139, alanine 154–alanine 171, leucine 180–methionine 202, isoleucine 212–alanine 234, leucine 241–leucine 263, and valine 273–isoleucine 292.

This sequence belongs to the GRP transporter (TC 2.A.7.5) family.

Its subcellular location is the cell membrane. Functionally, could be involved in the uptake of ribose. This chain is Putative ribose uptake protein RbsU (rbsU), found in Staphylococcus aureus (strain Mu50 / ATCC 700699).